A 113-amino-acid chain; its full sequence is Thioredoxin H-type (113 aa).

The region spanning 2-112 (GGSVIVIDSK…LKALVAKHAA (111 aa)) is the Thioredoxin domain. Residues Cys-37 and Cys-40 each act as nucleophile in the active site. A disulfide bond links Cys-37 and Cys-40.

Belongs to the thioredoxin family. Plant H-type subfamily.

The protein localises to the cytoplasm. In terms of biological role, participates in various redox reactions through the reversible oxidation of the active center dithiol to a disulfide. The H form is known to activate a number of cytosolic enzymes. The polypeptide is Thioredoxin H-type (TRXH) (Chlamydomonas reinhardtii (Chlamydomonas smithii)).